Consider the following 409-residue polypeptide: WW domain-containing oxidoreductase (409 aa).

A disordered region spans residues 1 to 23 (MIALPDTDSEDELPPGWEERATD). WW domains lie at 11–44 (DELP…HPRT) and 52–86 (GELP…DPRL). 128–134 (GANCGIG) serves as a coordination point for NADP(+). A substrate-binding site is contributed by serine 257. Tyrosine 288 (proton acceptor) is an active-site residue.

This sequence belongs to the short-chain dehydrogenases/reductases (SDR) family.

The protein localises to the cytoplasm. It localises to the mitochondrion. The protein resides in the golgi apparatus. It is found in the lysosome. Functionally, putative oxidoreductase. May control genotoxic stress-induced cell death. May play a role in TGFB1 signaling and TGFB1-mediated cell death. May also play a role in tumor necrosis factor (TNF)-mediated cell death. May play a role in Wnt signaling. This is WW domain-containing oxidoreductase (Wwox) from Drosophila melanogaster (Fruit fly).